The chain runs to 790 residues: AMP deaminase (790 aa).

The segment covering 1 to 14 (MSTPLRGSSPQVSF) has biased composition (polar residues). Positions 1–26 (MSTPLRGSSPQVSFYESELDQEGGSD) are disordered. Zn(2+) is bound by residues His221 and His223. Residues His223 and 292–297 (KFNLKY) contribute to the substrate site. His488 lines the Zn(2+) pocket. Residue Glu491 coordinates substrate. The Proton acceptor role is filled by His510. A Zn(2+)-binding site is contributed by Asp565. Substrate is bound at residue 566-569 (DPLQ). Disordered regions lie at residues 698–726 (NKLRNSSVGSTPNNGTPSSSGTPSLSSPG) and 739–790 (PPPL…KSDK). Composition is skewed to low complexity over residues 706-726 (GSTPNNGTPSSSGTPSLSSPG) and 750-781 (NNNNNNNNNNNNNNNNNNNTNTNTNSNSTTTN).

The protein belongs to the metallo-dependent hydrolases superfamily. Adenosine and AMP deaminases family. As to quaternary structure, homodimer. Zn(2+) serves as cofactor.

It is found in the cytoplasm. The enzyme catalyses AMP + H2O + H(+) = IMP + NH4(+). It participates in purine metabolism; IMP biosynthesis via salvage pathway; IMP from AMP: step 1/1. With respect to regulation, activated by ATP, inhibited by GTP, EDTA and inorganic phosphate. Its function is as follows. Catalyzes the conversion of adenosine monophosphate (AMP) to inosine monophosphate (IMP) and ammonia (NH4(+)). Participates in the regulation of the adenylated nucleotide pool and the interconversion to guanylated nucleotides during early morphodifferentiation. This Dictyostelium discoideum (Social amoeba) protein is AMP deaminase (amdA).